Here is a 456-residue protein sequence, read N- to C-terminus: Keratin, type I cuticular Ha8 (456 aa).

Residues 1–104 (MTSSYSSSSC…YGENTLNGHE (104 aa)) are head. The IF rod domain maps to 104–415 (EKETMQFLND…NLLESEDCKL (312 aa)). The tract at residues 105 to 139 (KETMQFLNDRLANYLEKVRQLEQENAELEATLLER) is coil 1A. The tract at residues 140–150 (SKCHESTVCPD) is linker 1. The segment at 151 to 251 (YQSYFHTIEE…HEQEVKILRS (101 aa)) is coil 1B. The tract at residues 252-267 (QLGEKLRIELDIEPTI) is linker 12. Residues 268 to 411 (DLNRVLGEMR…ATYRNLLESE (144 aa)) form a coil 2 region. Positions 412–456 (DCKLPCNPCSTSPSCVTAPCAPRPSCGPCTTCGPTCGASTTGSRF) are tail.

This sequence belongs to the intermediate filament family.

This chain is Keratin, type I cuticular Ha8 (KRT38), found in Homo sapiens (Human).